A 187-amino-acid polypeptide reads, in one-letter code: Acireductone dioxygenase (187 aa).

Residues His-87, His-89, Glu-93, and His-136 each coordinate Fe(2+). Ni(2+) contacts are provided by His-87, His-89, Glu-93, and His-136.

The protein belongs to the acireductone dioxygenase (ARD) family. Requires Fe(2+) as cofactor. Ni(2+) serves as cofactor.

It is found in the cytoplasm. The protein resides in the nucleus. The catalysed reaction is 1,2-dihydroxy-5-(methylsulfanyl)pent-1-en-3-one + O2 = 4-methylsulfanyl-2-oxobutanoate + formate + 2 H(+). The enzyme catalyses 1,2-dihydroxy-5-(methylsulfanyl)pent-1-en-3-one + O2 = 3-(methylsulfanyl)propanoate + CO + formate + 2 H(+). Its pathway is amino-acid biosynthesis; L-methionine biosynthesis via salvage pathway; L-methionine from S-methyl-5-thio-alpha-D-ribose 1-phosphate: step 5/6. Catalyzes 2 different reactions between oxygen and the acireductone 1,2-dihydroxy-3-keto-5-methylthiopentene (DHK-MTPene) depending upon the metal bound in the active site. Fe-containing acireductone dioxygenase (Fe-ARD) produces formate and 2-keto-4-methylthiobutyrate (KMTB), the alpha-ketoacid precursor of methionine in the methionine recycle pathway. Ni-containing acireductone dioxygenase (Ni-ARD) produces methylthiopropionate, carbon monoxide and formate, and does not lie on the methionine recycle pathway. The polypeptide is Acireductone dioxygenase (Cryptococcus neoformans var. neoformans serotype D (strain JEC21 / ATCC MYA-565) (Filobasidiella neoformans)).